A 685-amino-acid chain; its full sequence is Acetate--CoA ligase [ADP-forming] I (685 aa).

Residues 477–513 (LPVLEAYGIEVAPYGIARNVDEARDIAESIGYPVVLK) enclose the ATP-grasp domain. 503–514 (AESIGYPVVLKV) is an ATP binding site.

The protein in the N-terminal section; belongs to the acetate CoA ligase alpha subunit family. This sequence in the C-terminal section; belongs to the acetate CoA ligase beta subunit family. In terms of assembly, homodimer.

The enzyme catalyses acetate + ATP + CoA = acetyl-CoA + ADP + phosphate. Its activity is regulated as follows. Activity requires divalent metal cations. Catalyzes the reversible formation of acetate and ATP from acetyl-CoA by using ADP and phosphate. Can use other substrates such as propionyl-CoA and butyryl-CoA, but not phenylacetyl-CoA. Seems to be involved primarily in the conversion of acetyl-CoA to acetate. Participates in the degradation of branched-chain amino acids via branched-chain-acyl-CoA esters. The protein is Acetate--CoA ligase [ADP-forming] I of Archaeoglobus fulgidus (strain ATCC 49558 / DSM 4304 / JCM 9628 / NBRC 100126 / VC-16).